The sequence spans 222 residues: Protein-L-isoaspartate O-methyltransferase (222 aa).

S67 is a catalytic residue.

Belongs to the methyltransferase superfamily. L-isoaspartyl/D-aspartyl protein methyltransferase family.

The protein resides in the cytoplasm. The enzyme catalyses [protein]-L-isoaspartate + S-adenosyl-L-methionine = [protein]-L-isoaspartate alpha-methyl ester + S-adenosyl-L-homocysteine. In terms of biological role, catalyzes the methyl esterification of L-isoaspartyl residues in peptides and proteins that result from spontaneous decomposition of normal L-aspartyl and L-asparaginyl residues. It plays a role in the repair and/or degradation of damaged proteins. The protein is Protein-L-isoaspartate O-methyltransferase of Parvibaculum lavamentivorans (strain DS-1 / DSM 13023 / NCIMB 13966).